The chain runs to 343 residues: MQTKVLCQRDIKRILSVVGRDVMMDRLISEVHAGFARLGRGETDEPPPRTGFARGGDVPGVIEFMPHRASGIGVTMKTVSYSPQNFERFNLPTIVGTVSRLDDDSGSMVALADAATITAMRTGAVAAVATRLLARPGSTTLALIGAGAQAVTQAHALSRVLPLERILISDIKAEHAESFAGRVAFLELPVEVTDAATAMATADVLCTVTSVPVGGGPVVPAEPRQAHLHVNGIGADEQGKTELPKALLDDAFICVDHPGQARAEGEFQQLPDRELGPSLADLCAAPEIAAPHPERLSVFDSTGSAFADHIALDVLLGFADELGLGHKMSIESTPEDVLDPYSL.

Belongs to the ornithine cyclodeaminase/mu-crystallin family. NAD(+) serves as cofactor.

The enzyme catalyses L-lysine = L-pipecolate + NH4(+). Its pathway is antibiotic biosynthesis. Inhibited by nipecotic acid and thiazolidine-2-carboxylic acid. Its function is as follows. Converts L-lysine to L-pipecolate, which is incorporated into multiple secondary metabolite products, including rapamycin, tobulysin, virginiamycin and pristinamycin. The chain is L-lysine cyclodeaminase (rapL) from Streptomyces rapamycinicus (strain ATCC 29253 / DSM 41530 / NRRL 5491 / AYB-994) (Streptomyces hygroscopicus (strain ATCC 29253)).